The primary structure comprises 565 residues: NAD-dependent malic enzyme (565 aa).

Y104 acts as the Proton donor in catalysis. NAD(+) is bound at residue R157. Residue K175 is the Proton acceptor of the active site. Positions 246, 247, and 270 each coordinate a divalent metal cation. Residues D270 and N418 each coordinate NAD(+).

It belongs to the malic enzymes family. As to quaternary structure, homotetramer. It depends on Mg(2+) as a cofactor. Mn(2+) is required as a cofactor.

The enzyme catalyses (S)-malate + NAD(+) = pyruvate + CO2 + NADH. It carries out the reaction oxaloacetate + H(+) = pyruvate + CO2. This chain is NAD-dependent malic enzyme, found in Escherichia coli O157:H7.